Consider the following 237-residue polypeptide: Cysteine-rich venom protein DIS3 (237 aa).

The first 18 residues, 1-18 (MFVFILLSLAAVLQQSFG), serve as a signal peptide directing secretion. An SCP domain is found at 37–165 (VDKHNAFRRS…SYDYFYVCQY (129 aa)). Intrachain disulfides connect Cys-74-Cys-152, Cys-91-Cys-166, Cys-147-Cys-163, Cys-185-Cys-192, Cys-188-Cys-197, Cys-201-Cys-234, and Cys-219-Cys-232. The region spanning 201–234 (CSREDVFTNCKSLVAKSNCQDDYIRKNCLATCFC) is the ShKT domain.

It belongs to the CRISP family. As to expression, expressed by the venom gland.

The protein resides in the secreted. Its function is as follows. Weakly blocks contraction of smooth muscle elicited by high potassium-induced depolarization, but does not block caffeine-stimulated contraction. May target voltage-gated calcium channels on smooth muscle. The polypeptide is Cysteine-rich venom protein DIS3 (Dispholidus typus (Boomslang)).